The chain runs to 131 residues: Secreted RxLR effector protein 45 (131 aa).

An N-terminal signal peptide occupies residues 1–16 (MSIFIFISLVLGLAHQ). The short motif at 56–59 (RPLR) is the RxLR element. Residue asparagine 128 is glycosylated (N-linked (GlcNAc...) asparagine).

The protein belongs to the RxLR effector family.

It localises to the secreted. The protein resides in the host nucleus. In terms of biological role, secreted effector that completely suppresses the host cell death induced by cell death-inducing proteins. The polypeptide is Secreted RxLR effector protein 45 (Plasmopara viticola (Downy mildew of grapevine)).